The primary structure comprises 225 residues: uncharacterized protein (225 aa).

This is an uncharacterized protein from Arabidopsis thaliana (Mouse-ear cress).